The following is a 322-amino-acid chain: Corticotropin-releasing factor-binding protein (322 aa).

Positions 1–24 are cleaved as a signal peptide; sequence MSPNFKLQCHFILIFLTALRGESR. 5 disulfides stabilise this stretch: Cys60/Cys81, Cys104/Cys141, Cys183/Cys205, Cys237/Cys264, and Cys277/Cys318. Residue Asn204 is glycosylated (N-linked (GlcNAc...) asparagine).

It belongs to the CRF-binding protein family.

Its subcellular location is the secreted. In terms of biological role, binds CRF and inactivates it. May prevent inappropriate pituitary-adrenal stimulation in pregnancy. This is Corticotropin-releasing factor-binding protein (CRHBP) from Homo sapiens (Human).